The following is a 687-amino-acid chain: Guanine-nucleotide exchange factor YEL1 (687 aa).

The region spanning Ile-57 to Thr-264 is the SEC7 domain. Positions Ala-63–Asn-97 are disordered. The span at Thr-73 to Thr-83 shows a compositional bias: low complexity. Thr-290 carries the post-translational modification Phosphothreonine. Phosphoserine is present on residues Ser-293 and Ser-299. Residues Thr-412–Ile-551 enclose the PH domain.

The protein belongs to the YEL1 family.

It localises to the cytoplasm. It is found in the cell membrane. The protein resides in the bud neck. Its subcellular location is the bud tip. Guanine nucleotide exchange factor for ARF3 required for localization of ARF3 to the bud neck and tip and involved in actin patch polarization. This Saccharomyces cerevisiae (strain JAY291) (Baker's yeast) protein is Guanine-nucleotide exchange factor YEL1 (YEL1).